Here is a 75-residue protein sequence, read N- to C-terminus: Large ribosomal subunit protein bL31c (75 aa).

The protein belongs to the bacterial ribosomal protein bL31 family. Type A subfamily. In terms of assembly, part of the 50S ribosomal subunit.

The protein resides in the plastid. It is found in the chloroplast. Functionally, binds the 23S rRNA. This chain is Large ribosomal subunit protein bL31c, found in Cyanidium caldarium (Red alga).